We begin with the raw amino-acid sequence, 908 residues long: NADH-quinone oxidoreductase subunit G (908 aa).

The region spanning 2 to 83 (ATIHVDGKEY…GTFISIDDEE (82 aa)) is the 2Fe-2S ferredoxin-type domain. Residues cysteine 34, cysteine 45, cysteine 48, and cysteine 67 each coordinate [2Fe-2S] cluster. The 40-residue stretch at 83-122 (EAKQFRESVVEWLMTNHPHDCPVCEEGGNCHLQDMTVMTG) folds into the 4Fe-4S His(Cys)3-ligated-type domain. [4Fe-4S] cluster is bound by residues histidine 99, cysteine 103, cysteine 106, cysteine 112, cysteine 151, cysteine 154, cysteine 157, cysteine 201, cysteine 228, cysteine 231, cysteine 235, and cysteine 263. A 4Fe-4S Mo/W bis-MGD-type domain is found at 221–277 (MQFAPSICQQCSIGCNISPGERYGELRRIENRYNGTVNHYFLCDRGRFGYGYVNLKD).

The protein belongs to the complex I 75 kDa subunit family. Composed of 13 different subunits. Subunits NuoCD, E, F, and G constitute the peripheral sector of the complex. Requires [2Fe-2S] cluster as cofactor. The cofactor is [4Fe-4S] cluster.

Its subcellular location is the cytoplasm. The protein localises to the cell inner membrane. The enzyme catalyses a quinone + NADH + 5 H(+)(in) = a quinol + NAD(+) + 4 H(+)(out). Functionally, NDH-1 shuttles electrons from NADH, via FMN and iron-sulfur (Fe-S) centers, to quinones in the respiratory chain. The immediate electron acceptor for the enzyme in this species is believed to be ubiquinone. Couples the redox reaction to proton translocation (for every two electrons transferred, four hydrogen ions are translocated across the cytoplasmic membrane), and thus conserves the redox energy in a proton gradient. In Escherichia coli (strain K12), this protein is NADH-quinone oxidoreductase subunit G (nuoG).